The following is a 191-amino-acid chain: Thymidine kinase (191 aa).

Residues 15-22 (GPMYSGKT) and 88-91 (DEAQ) contribute to the ATP site. The active-site Proton acceptor is the glutamate 89. Cysteine 145, cysteine 148, cysteine 183, and cysteine 186 together coordinate Zn(2+).

Belongs to the thymidine kinase family. As to quaternary structure, homotetramer.

Its subcellular location is the cytoplasm. The enzyme catalyses thymidine + ATP = dTMP + ADP + H(+). This chain is Thymidine kinase, found in Clostridium botulinum (strain Kyoto / Type A2).